Here is a 176-residue protein sequence, read N- to C-terminus: Cathelicidin-2 (176 aa).

The N-terminal stretch at Met1–Ala29 is a signal peptide. Gln30 is subject to Pyrrolidone carboxylic acid. Residues Gln30–Val130 constitute a propeptide that is removed on maturation. 2 disulfide bridges follow: Cys85/Cys96 and Cys107/Cys124. The interval Pro135 to Arg176 is disordered. Positions Ile141–Arg176 are enriched in pro residues. Pro173 carries the proline amide modification. The propeptide at Gly174–Arg176 is removed in mature form.

The protein belongs to the cathelicidin family. Elastase is responsible for its maturation.

It is found in the secreted. Functionally, binds to the lipid A moiety of bacterial lipopolysaccharides (LPS), a glycolipid present in the outer membrane of all Gram-negative bacteria. Shows a potent antimicrobial activity against the Gram-negative bacteria E.coli, S.typhimurium and P.aeruginosa. Less active against the Gram-positive bacteria S.aureus, L.monocytogenes and B.subtilis. In Capra hircus (Goat), this protein is Cathelicidin-2 (CATHL2).